Reading from the N-terminus, the 276-residue chain is Acyl-[acyl-carrier-protein]--UDP-N-acetylglucosamine O-acyltransferase (276 aa).

It belongs to the transferase hexapeptide repeat family. LpxA subfamily. Homotrimer.

Its subcellular location is the cytoplasm. It catalyses the reaction a (3R)-hydroxyacyl-[ACP] + UDP-N-acetyl-alpha-D-glucosamine = a UDP-3-O-[(3R)-3-hydroxyacyl]-N-acetyl-alpha-D-glucosamine + holo-[ACP]. It participates in glycolipid biosynthesis; lipid IV(A) biosynthesis; lipid IV(A) from (3R)-3-hydroxytetradecanoyl-[acyl-carrier-protein] and UDP-N-acetyl-alpha-D-glucosamine: step 1/6. In terms of biological role, involved in the biosynthesis of lipid A, a phosphorylated glycolipid that anchors the lipopolysaccharide to the outer membrane of the cell. The protein is Acyl-[acyl-carrier-protein]--UDP-N-acetylglucosamine O-acyltransferase of Synechocystis sp. (strain ATCC 27184 / PCC 6803 / Kazusa).